The primary structure comprises 439 residues: UPF0489 protein C5orf22 homolog (439 aa).

Residues 163–219 (TTKLENGQSGAKIPKAAQTQDDMQSKADTPCTSSSQPPDGSAASGNISETAKKKADD) are disordered. Positions 179–211 (AQTQDDMQSKADTPCTSSSQPPDGSAASGNISE) are enriched in polar residues.

Belongs to the UPF0489 family.

The protein is UPF0489 protein C5orf22 homolog of Danio rerio (Zebrafish).